A 403-amino-acid polypeptide reads, in one-letter code: Tyrosine--tRNA ligase (403 aa).

Residues 42-51 (PTAPDLHLGH) carry the 'HIGH' region motif. A 'KMSKS' region motif is present at residues 226–230 (KMSKS). Lys229 serves as a coordination point for ATP. The S4 RNA-binding domain occupies 336 to 396 (MPISAVLNKA…GKKAFGRVTL (61 aa)).

Belongs to the class-I aminoacyl-tRNA synthetase family. TyrS type 2 subfamily. In terms of assembly, homodimer.

It is found in the cytoplasm. The enzyme catalyses tRNA(Tyr) + L-tyrosine + ATP = L-tyrosyl-tRNA(Tyr) + AMP + diphosphate + H(+). Catalyzes the attachment of tyrosine to tRNA(Tyr) in a two-step reaction: tyrosine is first activated by ATP to form Tyr-AMP and then transferred to the acceptor end of tRNA(Tyr). This is Tyrosine--tRNA ligase from Pseudomonas savastanoi pv. phaseolicola (strain 1448A / Race 6) (Pseudomonas syringae pv. phaseolicola (strain 1448A / Race 6)).